Consider the following 283-residue polypeptide: Putative transposase InsK for insertion sequence element IS150 (283 aa).

An Integrase catalytic domain is found at 117–279 (KATRPNEKWV…TPIEYRNQTY (163 aa)).

It belongs to the transposase IS3/IS150/IS904 family.

Its function is as follows. Involved in the transposition of the insertion sequence IS150. The protein is Putative transposase InsK for insertion sequence element IS150 (insK) of Escherichia coli (strain K12).